We begin with the raw amino-acid sequence, 636 residues long: Chaperone protein DnaK (636 aa).

Threonine 203 is modified (phosphothreonine; by autocatalysis). The disordered stretch occupies residues 602-636; that stretch reads VYGKQQEGAPAQEEPSAEGKKADDEGTVEGEFREV. The segment covering 618-636 has biased composition (basic and acidic residues); the sequence is AEGKKADDEGTVEGEFREV.

Belongs to the heat shock protein 70 family.

Functionally, acts as a chaperone. In Dehalococcoides mccartyi (strain ATCC BAA-2100 / JCM 16839 / KCTC 5957 / BAV1), this protein is Chaperone protein DnaK.